The chain runs to 355 residues: Tetraacyldisaccharide 4'-kinase (355 aa).

49–56 (SAGGTGKT) contacts ATP.

The protein belongs to the LpxK family.

The enzyme catalyses a lipid A disaccharide + ATP = a lipid IVA + ADP + H(+). Its pathway is glycolipid biosynthesis; lipid IV(A) biosynthesis; lipid IV(A) from (3R)-3-hydroxytetradecanoyl-[acyl-carrier-protein] and UDP-N-acetyl-alpha-D-glucosamine: step 6/6. Transfers the gamma-phosphate of ATP to the 4'-position of a tetraacyldisaccharide 1-phosphate intermediate (termed DS-1-P) to form tetraacyldisaccharide 1,4'-bis-phosphate (lipid IVA). This chain is Tetraacyldisaccharide 4'-kinase, found in Chlorobium phaeobacteroides (strain DSM 266 / SMG 266 / 2430).